Here is a 693-residue protein sequence, read N- to C-terminus: Sodium-dependent phosphate transport protein 2B (693 aa).

The disordered stretch occupies residues 1-46; the sequence is MAPWPELENSQPTSEKYTVKADGEQSAKPEKAKETEKDDTGTPITK. Over 1–89 the chain is Cytoplasmic; it reads MAPWPELENS…KWSERDTKGK (89 aa). Positions 17 to 40 are enriched in basic and acidic residues; the sequence is YTVKADGEQSAKPEKAKETEKDDT. Residues 90-110 form a helical membrane-spanning segment; the sequence is ILCVFQGIGKFILLLVFLYFF. The Extracellular portion of the chain corresponds to 111–135; sequence VCSLDVLSSAFQLVGGKVAGKFFNN. A helical membrane pass occupies residues 136–156; that stretch reads NSIMSNPLAGMVIGVLVTVLV. Residues 157 to 212 are Cytoplasmic-facing; it reads QSSSTSTSIVVSMVASSLLPVHAAIPIIMGANIGTSITNTIVALMQAGDRKEFRRA. A helical membrane pass occupies residues 213 to 233; it reads FAGATVHDFFNWLSVLVLLPL. Over 234-361 the chain is Extracellular; the sequence is EAATGYLERL…IFVNFNLSDA (128 aa). Cysteine 302 and cysteine 349 are oxidised to a cystine. 2 N-linked (GlcNAc...) asparagine glycosylation sites follow: asparagine 307 and asparagine 320. Residues 362 to 382 traverse the membrane as a helical segment; sequence IVGTILLITSLLILCTCLILI. Residues 383-408 lie on the Cytoplasmic side of the membrane; the sequence is VKLLGSVLRGQVAAVIKKTINTDFPY. The chain crosses the membrane as a helical span at residues 409–429; sequence PFSWVTGYLAILVGAGMTFIV. The Extracellular segment spans residues 430 to 485; the sequence is QSSSVFTSAMTPLIGIGVISIQRAYPLTLGANIGTTTTAILAALASPGSTLKSSLQ. Residues 486–506 form a helical membrane-spanning segment; the sequence is IALCHFFFNISGIILWYPIPF. The Cytoplasmic segment spans residues 507-525; the sequence is TRLPIRLAKGLGNISSKYR. Residues 526–546 traverse the membrane as a helical segment; it reads WFAIVYLIVFFLLIPLAVFGL. The Extracellular portion of the chain corresponds to 547-550; it reads SLIG. Residues 551 to 571 form a helical membrane-spanning segment; sequence WPVLVGVASPIVLVILLVVVL. Residues 572 to 693 are Cytoplasmic-facing; the sequence is KILQSFCPGS…TKIVSSVTAL (122 aa).

Belongs to the SLC34A transporter family. Glycosylated.

The protein resides in the apical cell membrane. The enzyme catalyses 3 Na(+)(out) + phosphate(out) = 3 Na(+)(in) + phosphate(in). In terms of biological role, involved in actively transporting phosphate into cells via Na(+) cotransport. This Bos taurus (Bovine) protein is Sodium-dependent phosphate transport protein 2B (SLC34A2).